Reading from the N-terminus, the 30-residue chain is Hementerin (30 aa).

The cofactor is Ca(2+).

It localises to the secreted. Its activity is regulated as follows. Fibrino(geno)lytic activity inhibited by EDTA but not by PMSF, E-64, 6-AHA and aprotinin. Its function is as follows. Cleaves fibrinogen Aalpha (FGA), gamma (FGG) and Bbeta (FGB) chains. Degrades cross-linked fibrin. Has no amidolytic, plasminogenolytic or caseinolytic activity. Inhibits platelet aggregation induced by collagen (IC(50)=7.5ug/ml) and various other agonists, presumably via activation of a nitridergic pathway. Inhibition is accompanied by reduced ATP release from and surface expression of SELP and CD63 on platelets as well as increased intracellular levels of Ca(2+), cGMP and nitric oxide synthase activity. The chain is Hementerin from Haementeria depressa (Leech).